Consider the following 307-residue polypeptide: Plasmodesmata-located protein 2 (307 aa).

An N-terminal signal peptide occupies residues 1 to 23 (MGLSISFLSIIMMMCLLFPDLNV). The Extracellular portion of the chain corresponds to 24-275 (VVKSATTEYT…STSTGATGKT (252 aa)). Gnk2-homologous domains are found at residues 33–136 (TTLI…VSGF) and 141–240 (GMEM…YYPN). Intrachain disulfides connect Cys-40–Cys-114, Cys-90–Cys-99, Cys-102–Cys-127, Cys-149–Cys-218, Cys-194–Cys-203, and Cys-206–Cys-231. The span at 246–268 (SSSSSSSSSSSSSGSSNSDPSTS) shows a compositional bias: low complexity. Residues 246–270 (SSSSSSSSSSSSSGSSNSDPSTSTG) form a disordered region. Residues 276–296 (VAIIVGGAAGVGFLVICLLFA) form a helical membrane-spanning segment. The interval 276–296 (VAIIVGGAAGVGFLVICLLFA) is necessary and sufficient for plasmodesmal targeting. Residues 297-307 (KNLMRKKHDDY) lie on the Cytoplasmic side of the membrane.

It belongs to the cysteine-rich repeat secretory protein family. Plasmodesmata-located proteins (PDLD) subfamily. In terms of assembly, (Microbial infection) Interacts with Grapevine fanleaf virus (GFLV) 2B-MP. As to expression, highly expressed in inflorescence shoot apex. Uniformly expressed within the inflorescence meristem with the exception of a boundary zone between floral primordia and the meristem where the expression is weaker (at protein level).

The protein resides in the cell membrane. The protein localises to the cell junction. Its subcellular location is the plasmodesma. Its function is as follows. Modulates cell-to-cell trafficking. The sequence is that of Plasmodesmata-located protein 2 from Arabidopsis thaliana (Mouse-ear cress).